The sequence spans 144 residues: Large ribosomal subunit protein uL15 (144 aa).

Basic residues predominate over residues 1 to 13; the sequence is MVRERTKKLRGGH. The tract at residues 1–32 is disordered; the sequence is MVRERTKKLRGGHYGRGFKAGRGKGKKGGSGN.

Belongs to the universal ribosomal protein uL15 family. Part of the 50S ribosomal subunit.

Its function is as follows. Binds to the 23S rRNA. The protein is Large ribosomal subunit protein uL15 of Thermoplasma acidophilum (strain ATCC 25905 / DSM 1728 / JCM 9062 / NBRC 15155 / AMRC-C165).